The following is a 365-amino-acid chain: UDP-N-acetylglucosamine--N-acetylmuramyl-(pentapeptide) pyrophosphoryl-undecaprenol N-acetylglucosamine transferase (365 aa).

UDP-N-acetyl-alpha-D-glucosamine contacts are provided by residues 10 to 12 (TGG), N128, R170, S199, I250, and Q295.

This sequence belongs to the glycosyltransferase 28 family. MurG subfamily.

The protein resides in the cell inner membrane. The enzyme catalyses di-trans,octa-cis-undecaprenyl diphospho-N-acetyl-alpha-D-muramoyl-L-alanyl-D-glutamyl-meso-2,6-diaminopimeloyl-D-alanyl-D-alanine + UDP-N-acetyl-alpha-D-glucosamine = di-trans,octa-cis-undecaprenyl diphospho-[N-acetyl-alpha-D-glucosaminyl-(1-&gt;4)]-N-acetyl-alpha-D-muramoyl-L-alanyl-D-glutamyl-meso-2,6-diaminopimeloyl-D-alanyl-D-alanine + UDP + H(+). Its pathway is cell wall biogenesis; peptidoglycan biosynthesis. In terms of biological role, cell wall formation. Catalyzes the transfer of a GlcNAc subunit on undecaprenyl-pyrophosphoryl-MurNAc-pentapeptide (lipid intermediate I) to form undecaprenyl-pyrophosphoryl-MurNAc-(pentapeptide)GlcNAc (lipid intermediate II). The polypeptide is UDP-N-acetylglucosamine--N-acetylmuramyl-(pentapeptide) pyrophosphoryl-undecaprenol N-acetylglucosamine transferase (Chlorobium luteolum (strain DSM 273 / BCRC 81028 / 2530) (Pelodictyon luteolum)).